The sequence spans 177 residues: Glutathione peroxidase homolog (177 aa).

Cys35 is an active-site residue.

Belongs to the glutathione peroxidase family.

In terms of biological role, important in the cellular metabolism or defense processes particular to this pathogen. The protein is Glutathione peroxidase homolog (gpxA) of Neisseria meningitidis serogroup A / serotype 4A (strain DSM 15465 / Z2491).